The chain runs to 420 residues: Structure-specific endonuclease subunit SLX1 homolog (420 aa).

One can recognise a GIY-YIG domain in the interval 19 to 106 (SSDNTYPWQN…QHPLKSRRLR (88 aa)). Disordered regions lie at residues 237–306 (SVEE…AAVN) and 311–330 (DDSA…DDVA). The span at 247–266 (PSSCSVPPSTGSSAAPTPGA) shows a compositional bias: low complexity. Residues 279–301 (VDPRLDSDDRDDNHQFESPDNHE) are compositionally biased toward basic and acidic residues. Residues 311 to 327 (DDSADDGTTDGNEDGPD) show a composition bias toward acidic residues. An SLX1-type zinc finger spans residues 348 to 405 (CGHCHQSVYQELCIVCLNATCTYRAHLLCAAQAAVHPLGQSSPSETRLVPLRHSCPRC).

It belongs to the SLX1 family. Forms a heterodimer with a member of the SLX4 family. Requires a divalent metal cation as cofactor.

Its subcellular location is the nucleus. Catalytic subunit of a heterodimeric structure-specific endonuclease that resolves DNA secondary structures generated during DNA repair and recombination. Has endonuclease activity towards branched DNA substrates, introducing single-strand cuts in duplex DNA close to junctions with ss-DNA. This chain is Structure-specific endonuclease subunit SLX1 homolog, found in Monosiga brevicollis (Choanoflagellate).